A 334-amino-acid chain; its full sequence is Protein-methionine-sulfoxide reductase catalytic subunit MsrP (334 aa).

The tat-type signal signal peptide spans 1-44 (MKKNQFLKESDVTAESVFFMKRRQVLKALGISAAALSLPHAAHA). Residues asparagine 88, 91–92 (YE), cysteine 146, threonine 181, asparagine 233, arginine 238, and 249–251 (GIK) contribute to the Mo-molybdopterin site.

This sequence belongs to the MsrP family. Heterodimer of a catalytic subunit (MsrP) and a heme-binding subunit (MsrQ). Mo-molybdopterin serves as cofactor. Predicted to be exported by the Tat system. The position of the signal peptide cleavage has not been experimentally proven.

Its subcellular location is the periplasm. The enzyme catalyses L-methionyl-[protein] + a quinone + H2O = L-methionyl-(S)-S-oxide-[protein] + a quinol. It carries out the reaction L-methionyl-[protein] + a quinone + H2O = L-methionyl-(R)-S-oxide-[protein] + a quinol. Its function is as follows. Part of the MsrPQ system that repairs oxidized periplasmic proteins containing methionine sulfoxide residues (Met-O), using respiratory chain electrons. Thus protects these proteins from oxidative-stress damage caused by reactive species of oxygen and chlorine generated by the host defense mechanisms. MsrPQ is essential for the maintenance of envelope integrity under bleach stress, rescuing a wide series of structurally unrelated periplasmic proteins from methionine oxidation, including the primary periplasmic chaperone SurA and the lipoprotein Pal. The catalytic subunit MsrP is non-stereospecific, being able to reduce both (R-) and (S-) diastereoisomers of methionine sulfoxide. This chain is Protein-methionine-sulfoxide reductase catalytic subunit MsrP, found in Escherichia coli O127:H6 (strain E2348/69 / EPEC).